The primary structure comprises 20 residues: Short cationic peptide-6a (20 aa).

Serine amide is present on S20.

In terms of tissue distribution, expressed by the venom gland.

It localises to the secreted. The polypeptide is Short cationic peptide-6a (Cupiennius salei (American wandering spider)).